Consider the following 398-residue polypeptide: Phosphoglycerate kinase (398 aa).

Substrate contacts are provided by residues 21–23 (DFN), R36, 59–62 (HFGR), R117, and R150. Residues K200, E321, and 351-354 (GGDS) each bind ATP.

This sequence belongs to the phosphoglycerate kinase family. In terms of assembly, monomer.

It localises to the cytoplasm. It carries out the reaction (2R)-3-phosphoglycerate + ATP = (2R)-3-phospho-glyceroyl phosphate + ADP. It functions in the pathway carbohydrate degradation; glycolysis; pyruvate from D-glyceraldehyde 3-phosphate: step 2/5. This Wolbachia sp. subsp. Drosophila simulans (strain wRi) protein is Phosphoglycerate kinase.